Reading from the N-terminus, the 40-residue chain is Photosystem II reaction center protein J (40 aa).

Residues 8-28 traverse the membrane as a helical segment; the sequence is IPLWLISTVTGTLVIGLMGIF.

It belongs to the PsbJ family. As to quaternary structure, PSII is composed of 1 copy each of membrane proteins PsbA, PsbB, PsbC, PsbD, PsbE, PsbF, PsbH, PsbI, PsbJ, PsbK, PsbL, PsbM, PsbT, PsbX, PsbY, PsbZ, Psb30/Ycf12, at least 3 peripheral proteins of the oxygen-evolving complex and a large number of cofactors. It forms dimeric complexes.

It is found in the plastid. The protein localises to the chloroplast thylakoid membrane. Functionally, one of the components of the core complex of photosystem II (PSII). PSII is a light-driven water:plastoquinone oxidoreductase that uses light energy to abstract electrons from H(2)O, generating O(2) and a proton gradient subsequently used for ATP formation. It consists of a core antenna complex that captures photons, and an electron transfer chain that converts photonic excitation into a charge separation. This is Photosystem II reaction center protein J from Ginkgo biloba (Ginkgo).